Reading from the N-terminus, the 362-residue chain is Adenosine deaminase (362 aa).

The Zn(2+) site is built by His-19 and His-21. 3 residues coordinate substrate: His-21, Asp-23, and Gly-181. His-208 contacts Zn(2+). Catalysis depends on Glu-211, which acts as the Proton donor. Position 300 (Asp-300) interacts with Zn(2+).

This sequence belongs to the metallo-dependent hydrolases superfamily. Adenosine and AMP deaminases family. Adenosine deaminase subfamily. Zn(2+) serves as cofactor.

It carries out the reaction adenosine + H2O + H(+) = inosine + NH4(+). The catalysed reaction is 2'-deoxyadenosine + H2O + H(+) = 2'-deoxyinosine + NH4(+). Its function is as follows. Catalyzes the hydrolytic deamination of adenosine and 2-deoxyadenosine. The protein is Adenosine deaminase of Mycobacterium leprae (strain TN).